The chain runs to 310 residues: Junctional adhesion molecule C (310 aa).

Positions Met-1–Ala-31 are cleaved as a signal peptide. The Extracellular segment spans residues Val-32–Asn-241. The region spanning Lys-35–Asp-127 is the Ig-like V-type domain. Intrachain disulfides connect Cys-53-Cys-115 and Cys-160-Cys-219. 2 N-linked (GlcNAc...) asparagine glycosylation sites follow: Asn-104 and Asn-192. The Ig-like C2-type domain occupies Pro-139–Glu-236. The chain crosses the membrane as a helical span at residues Ile-242 to Gly-262. The Cytoplasmic portion of the chain corresponds to Ile-263–Ile-310. S-palmitoyl cysteine attachment occurs at residues Cys-264 and Cys-265.

Belongs to the immunoglobulin superfamily. Interacts with ITGAM. Interacts with GORASP2. In terms of processing, proteolytically cleaved from endothelial cells surface into a soluble form by ADAM10 and ADAM17; the release of soluble JAM3 is increased by pro-inflammatory factors. S-palmitoylated by ZDHHC7. S-palmitoylation promotes expression at tight junctions. In terms of tissue distribution, detected on round and elongated spermatids (at protein level). Highest expression in placenta, brain and kidney. Significant expression is detected on platelets. Expressed in intestinal mucosa cells. Expressed in the vascular endothelium. Found in serum (at protein level). Also detected in the synovial fluid of patients with rheumatoid arthritis, psoriatic arthritis or ostearthritis (at protein level).

It is found in the cell membrane. The protein localises to the cell junction. The protein resides in the desmosome. Its subcellular location is the tight junction. It localises to the secreted. Junctional adhesion protein that mediates heterotypic cell-cell interactions with its cognate receptor JAM2 to regulate different cellular processes. Plays a role in homing and mobilization of hematopoietic stem and progenitor cells within the bone marrow. At the surface of bone marrow stromal cells, it contributes to the retention of the hematopoietic stem and progenitor cells expressing JAM3. Plays a central role in leukocytes extravasation by facilitating transmigration through the endothelium. Plays a role in spermatogenesis where JAM2 and JAM3, which are respectively expressed by Sertoli and germ cells, mediate an interaction between both cell types and play an essential role in the anchorage of germ cells onto Sertoli cells and the assembly of cell polarity complexes during spermatid differentiation. Also functions as a counter-receptor for ITGAM, mediating leukocyte-platelet interactions and is involved in the regulation of transepithelial migration of polymorphonuclear neutrophils (PMN). Plays a role in angiogenesis. Plays a role in the regulation of cell migration. During myogenesis, it is involved in myocyte fusion. Its function is as follows. Promotes chemotaxis of vascular endothelial cells and stimulates angiogenesis. The protein is Junctional adhesion molecule C (JAM3) of Homo sapiens (Human).